The following is a 314-amino-acid chain: Porphobilinogen deaminase (314 aa).

The residue at position 243 (Cys-243) is an S-(dipyrrolylmethanemethyl)cysteine.

This sequence belongs to the HMBS family. Monomer. Dipyrromethane is required as a cofactor.

It catalyses the reaction 4 porphobilinogen + H2O = hydroxymethylbilane + 4 NH4(+). Its pathway is porphyrin-containing compound metabolism; protoporphyrin-IX biosynthesis; coproporphyrinogen-III from 5-aminolevulinate: step 2/4. Functionally, tetrapolymerization of the monopyrrole PBG into the hydroxymethylbilane pre-uroporphyrinogen in several discrete steps. This Bordetella bronchiseptica (strain ATCC BAA-588 / NCTC 13252 / RB50) (Alcaligenes bronchisepticus) protein is Porphobilinogen deaminase.